A 114-amino-acid chain; its full sequence is Probable acid stress chaperone HdeA (114 aa).

The signal sequence occupies residues 1–26 (MIKTLFNKNTALAAVAILALSGSAMA). A disulfide bond links cysteine 46 and cysteine 94.

Belongs to the HdeA family.

It localises to the periplasm. Required for optimal acid stress protection. Exhibits a chaperone-like activity only at low pH by suppressing non-specifically the aggregation of denaturated periplasmic proteins. This chain is Probable acid stress chaperone HdeA, found in Brucella ovis (strain ATCC 25840 / 63/290 / NCTC 10512).